Here is a 428-residue protein sequence, read N- to C-terminus: MQTLIWNTLNSAQKQAALSRPAQAVGEQITQAVNAIKSNVINNGDKALFELAEKFDKTTLESLVISKAQVEQASQRIATELKQAIQTAKGNIERFHQAQKNQTVDLETQAGVRCQVVTRPIQNVGLYIPGGSAPLFSTVLMLAVPAKIAGCKTIVLCSPPPIADEILYTANLCGVETIYAIGGAQAIFAMANGTESVQKVDKIFGPGNAFVTEAKRQVLQQGTAIDMPAGPSEVLVIADEFADPDFVASDLLSQAEHGSDSQVILVTNCETLAKQTALSIEQQLARLPRAETARKALAHSRTFIAEDLQQCVEISNAYAPEHLVVQVENARNLLPFLDNAGSIFLGAYSPESMGDYASGTNHVLPTYGYTRTHSSLGLADFSKRMTVQELTPQGFKDLANTVMLMAEAEQLEAHKQAVAIRLEKLTQE.

Tyrosine 127, glutamine 185, and asparagine 208 together coordinate NAD(+). 3 residues coordinate substrate: serine 232, glutamine 254, and histidine 257. Zn(2+) contacts are provided by glutamine 254 and histidine 257. Active-site proton acceptor residues include glutamate 321 and histidine 322. Substrate contacts are provided by histidine 322, aspartate 355, glutamate 409, and histidine 414. Residue aspartate 355 participates in Zn(2+) binding. Residue histidine 414 coordinates Zn(2+).

This sequence belongs to the histidinol dehydrogenase family. It depends on Zn(2+) as a cofactor.

It carries out the reaction L-histidinol + 2 NAD(+) + H2O = L-histidine + 2 NADH + 3 H(+). Its pathway is amino-acid biosynthesis; L-histidine biosynthesis; L-histidine from 5-phospho-alpha-D-ribose 1-diphosphate: step 9/9. Catalyzes the sequential NAD-dependent oxidations of L-histidinol to L-histidinaldehyde and then to L-histidine. This Pasteurella multocida (strain Pm70) protein is Histidinol dehydrogenase.